The following is a 339-amino-acid chain: Phospho-N-acetylmuramoyl-pentapeptide-transferase (339 aa).

10 helical membrane-spanning segments follow: residues 4–24, 53–73, 80–100, 113–133, 145–165, 176–196, 202–222, 228–248, 253–273, and 318–338; these read TTII…PFFI, MGGT…AFVL, AFGA…IGFL, GLTA…FYLV, LFGF…FWVV, GIDG…SVIA, FDVL…FVYN, VFMG…ISIT, WTLL…MLQV, and VDFF…AILY.

Belongs to the glycosyltransferase 4 family. MraY subfamily. The cofactor is Mg(2+).

Its subcellular location is the cell membrane. It catalyses the reaction UDP-N-acetyl-alpha-D-muramoyl-L-alanyl-gamma-D-glutamyl-L-lysyl-D-alanyl-D-alanine + di-trans,octa-cis-undecaprenyl phosphate = Mur2Ac(oyl-L-Ala-gamma-D-Glu-L-Lys-D-Ala-D-Ala)-di-trans,octa-cis-undecaprenyl diphosphate + UMP. It participates in cell wall biogenesis; peptidoglycan biosynthesis. Catalyzes the initial step of the lipid cycle reactions in the biosynthesis of the cell wall peptidoglycan: transfers peptidoglycan precursor phospho-MurNAc-pentapeptide from UDP-MurNAc-pentapeptide onto the lipid carrier undecaprenyl phosphate, yielding undecaprenyl-pyrophosphoryl-MurNAc-pentapeptide, known as lipid I. This is Phospho-N-acetylmuramoyl-pentapeptide-transferase from Streptococcus mutans serotype c (strain ATCC 700610 / UA159).